Reading from the N-terminus, the 404-residue chain is Cysteine desulfurase IscS (404 aa).

Pyridoxal 5'-phosphate is bound by residues 75–76, asparagine 155, glutamine 183, and 203–205; these read AT and SAH. Lysine 206 is subject to N6-(pyridoxal phosphate)lysine. Threonine 243 provides a ligand contact to pyridoxal 5'-phosphate. The active-site Cysteine persulfide intermediate is cysteine 328. Cysteine 328 serves as a coordination point for [2Fe-2S] cluster.

It belongs to the class-V pyridoxal-phosphate-dependent aminotransferase family. NifS/IscS subfamily. Homodimer. Forms a heterotetramer with IscU, interacts with other sulfur acceptors. It depends on pyridoxal 5'-phosphate as a cofactor.

It localises to the cytoplasm. It catalyses the reaction (sulfur carrier)-H + L-cysteine = (sulfur carrier)-SH + L-alanine. The protein operates within cofactor biosynthesis; iron-sulfur cluster biosynthesis. Master enzyme that delivers sulfur to a number of partners involved in Fe-S cluster assembly, tRNA modification or cofactor biosynthesis. Catalyzes the removal of elemental sulfur atoms from cysteine to produce alanine. Functions as a sulfur delivery protein for Fe-S cluster synthesis onto IscU, an Fe-S scaffold assembly protein, as well as other S acceptor proteins. The polypeptide is Cysteine desulfurase IscS (Buchnera aphidicola subsp. Schizaphis graminum (strain Sg)).